Consider the following 415-residue polypeptide: Chorismate synthase (415 aa).

The interval 43 to 72 (EDLDRRKPGQSMITTSRGEPDKVSIKSGLQ) is disordered. An NADP(+)-binding site is contributed by arginine 48. Residues 125-127 (RSS), glycine 304, 319-323 (HAPVS), and arginine 346 contribute to the FMN site. A disordered region spans residues 262 to 310 (TDYTEDWEFGESEATASENASGDEPRARGDPKPVGNDHGGIQGGITTGD). Gly residues predominate over residues 298–307 (DHGGIQGGIT). Over residues 379 to 393 (PDRLDDRPGEYDTDY) the composition is skewed to basic and acidic residues. The disordered stretch occupies residues 379–415 (PDRLDDRPGEYDTDYHPSSPRNDPEDADTHATTVDED).

The protein belongs to the chorismate synthase family. FMNH2 serves as cofactor.

It carries out the reaction 5-O-(1-carboxyvinyl)-3-phosphoshikimate = chorismate + phosphate. Its pathway is metabolic intermediate biosynthesis; chorismate biosynthesis; chorismate from D-erythrose 4-phosphate and phosphoenolpyruvate: step 7/7. Catalyzes the anti-1,4-elimination of the C-3 phosphate and the C-6 proR hydrogen from 5-enolpyruvylshikimate-3-phosphate (EPSP) to yield chorismate, which is the branch point compound that serves as the starting substrate for the three terminal pathways of aromatic amino acid biosynthesis. This reaction introduces a second double bond into the aromatic ring system. The sequence is that of Chorismate synthase from Halomicrobium mukohataei (strain ATCC 700874 / DSM 12286 / JCM 9738 / NCIMB 13541) (Haloarcula mukohataei).